Consider the following 248-residue polypeptide: Deoxyribose-phosphate aldolase (248 aa).

The active-site Proton donor/acceptor is the Asp-117. The active-site Schiff-base intermediate with acetaldehyde is Lys-179. Lys-208 functions as the Proton donor/acceptor in the catalytic mechanism.

It belongs to the DeoC/FbaB aldolase family. DeoC type 1 subfamily.

Its subcellular location is the cytoplasm. It carries out the reaction 2-deoxy-D-ribose 5-phosphate = D-glyceraldehyde 3-phosphate + acetaldehyde. It functions in the pathway carbohydrate degradation; 2-deoxy-D-ribose 1-phosphate degradation; D-glyceraldehyde 3-phosphate and acetaldehyde from 2-deoxy-alpha-D-ribose 1-phosphate: step 2/2. Functionally, catalyzes a reversible aldol reaction between acetaldehyde and D-glyceraldehyde 3-phosphate to generate 2-deoxy-D-ribose 5-phosphate. The protein is Deoxyribose-phosphate aldolase of Thermotoga maritima (strain ATCC 43589 / DSM 3109 / JCM 10099 / NBRC 100826 / MSB8).